Here is a 170-residue protein sequence, read N- to C-terminus: Adenine phosphoribosyltransferase (170 aa).

The protein belongs to the purine/pyrimidine phosphoribosyltransferase family. As to quaternary structure, homodimer.

The protein resides in the cytoplasm. It carries out the reaction AMP + diphosphate = 5-phospho-alpha-D-ribose 1-diphosphate + adenine. It participates in purine metabolism; AMP biosynthesis via salvage pathway; AMP from adenine: step 1/1. Functionally, catalyzes a salvage reaction resulting in the formation of AMP, that is energically less costly than de novo synthesis. This Acholeplasma laidlawii (strain PG-8A) protein is Adenine phosphoribosyltransferase.